Here is a 181-residue protein sequence, read N- to C-terminus: Protein GrpE (181 aa).

Residues 1–10 (MENTQENPAT) show a composition bias toward polar residues. Positions 1–33 (MENTQENPATPSAEDIGSEKQAAQGAAPAAEAA) are disordered. Residues 21 to 33 (QAAQGAAPAAEAA) are compositionally biased toward low complexity.

Belongs to the GrpE family. As to quaternary structure, homodimer.

The protein localises to the cytoplasm. Functionally, participates actively in the response to hyperosmotic and heat shock by preventing the aggregation of stress-denatured proteins, in association with DnaK and GrpE. It is the nucleotide exchange factor for DnaK and may function as a thermosensor. Unfolded proteins bind initially to DnaJ; upon interaction with the DnaJ-bound protein, DnaK hydrolyzes its bound ATP, resulting in the formation of a stable complex. GrpE releases ADP from DnaK; ATP binding to DnaK triggers the release of the substrate protein, thus completing the reaction cycle. Several rounds of ATP-dependent interactions between DnaJ, DnaK and GrpE are required for fully efficient folding. In Burkholderia cenocepacia (strain ATCC BAA-245 / DSM 16553 / LMG 16656 / NCTC 13227 / J2315 / CF5610) (Burkholderia cepacia (strain J2315)), this protein is Protein GrpE.